Consider the following 265-residue polypeptide: Aquaporin-5 (265 aa).

The Cytoplasmic segment spans residues 1–12 (MKKEVCSVAFLK). A helical transmembrane segment spans residues 13-33 (AVFAEFLATLIFVFFGLGSAL). The Extracellular portion of the chain corresponds to 34–39 (KWPSAL). A helical transmembrane segment spans residues 40-60 (PTILQIALAFGLAIGTLAQAL). The Cytoplasmic segment spans residues 61–65 (GPVSG). Residues 66 to 74 (GHINPAITL) constitute an intramembrane region (discontinuously helical). An NPA 1 motif is present at residues 69 to 71 (NPA). At 75 to 87 (ALLVGNQISLLRA) the chain is on the cytoplasmic side. A helical transmembrane segment spans residues 88-108 (FFYVAAQLVGAIAGAGILYGV). The Extracellular segment spans residues 109 to 126 (APLNARGNLAVNALNNNT). N124 and N125 each carry an N-linked (GlcNAc...) asparagine glycan. Residues 127 to 147 (TQGQAMVVELILTFQLALCIF) traverse the membrane as a helical segment. The Cytoplasmic segment spans residues 148–158 (ASTDSRRTSPV). The chain crosses the membrane as a helical span at residues 159-179 (GSPALSIGLSVTLGHLVGIYF). Position 180 (T180) is a topological domain, extracellular. Residues 181–191 (GCSMNPARSFG) constitute an intramembrane region (discontinuously helical). Residues 185–187 (NPA) carry the NPA 2 motif. Topologically, residues 192 to 203 (PAVVMNRFSPAH) are extracellular. A helical transmembrane segment spans residues 204-224 (WVFWVGPIVGAVLAAILYFYL). Residues 225–265 (LFPNSLSLSERVAIIKGTYEPDEDWEEQREERKKTMELTTR) lie on the Cytoplasmic side of the membrane.

It belongs to the MIP/aquaporin (TC 1.A.8) family. As to quaternary structure, homotetramer; each monomer provides an independent water pore. Interacts with TRPV4; the interaction is probably indirect and regulates TRPV4 activation by hypotonicity. Detected in skin eccrine sweat glands, at the apical cell membrane and at intercellular canaliculi (at protein level).

Its subcellular location is the apical cell membrane. The protein resides in the cell membrane. It is found in the cytoplasmic vesicle membrane. It catalyses the reaction H2O(in) = H2O(out). Aquaporins form homotetrameric transmembrane channels, with each monomer independently mediating water transport across the plasma membrane along its osmotic gradient. Plays an important role in fluid secretion in salivary glands. Required for TRPV4 activation by hypotonicity. Together with TRPV4, controls regulatory volume decrease in salivary epithelial cells. Seems to play a redundant role in water transport in the eye, lung and in sweat glands. This Homo sapiens (Human) protein is Aquaporin-5.